A 161-amino-acid chain; its full sequence is uncharacterized protein (161 aa).

The next 4 membrane-spanning stretches (helical) occupy residues 22–42 (LFFI…VFGH), 43–63 (LTVG…ALLV), 89–109 (LAII…AGLG), and 110–130 (VVFG…LPVL). Residues 141-161 (VATYSSNGQTGGSEGRSASDD) are disordered.

This sequence to M.leprae ML1138.

It localises to the cell membrane. This is an uncharacterized protein from Mycobacterium bovis (strain ATCC BAA-935 / AF2122/97).